The chain runs to 72 residues: MLTLKKSMLLLFFLGLVSVSLADDKREDEAEEGEDKRAAEEERNVEKRCYSAAKYPGFQEFINRKYKSSRFG.

The signal sequence occupies residues 1 to 22 (MLTLKKSMLLLFFLGLVSVSLA). A propeptide spanning residues 23-48 (DDKREDEAEEGEDKRAAEEERNVEKR) is cleaved from the precursor. Phe-71 is subject to Phenylalanine amide.

It belongs to the frog skin active peptide (FSAP) family. Brevinin subfamily. As to quaternary structure, homodimer; disulfide-linked. As to expression, expressed by the skin glands.

It localises to the secreted. Its function is as follows. Antibacterial activity against the Gram-positive bacterium M.luteus and the Gram-negative bacterium E.coli. The sequence is that of Galensin from Kassina senegalensis (Senegal running frog).